The chain runs to 173 residues: MARPDKAAAVAELTEKFRSSSAAVLTEYRGLTVAQLKALRTSLGGSAHYAVVKNTLTAIAAKEAGIDAFEGQLSGPTAIAFVEGDPVAAAKGLRDFAKANPALVIKAGVLDGKAITSSEITALADLESREVLLAKAAGAFKAKLYQAAYLFTAPASQAVRTIDALREKQADAA.

It belongs to the universal ribosomal protein uL10 family. In terms of assembly, part of the ribosomal stalk of the 50S ribosomal subunit. The N-terminus interacts with L11 and the large rRNA to form the base of the stalk. The C-terminus forms an elongated spine to which L12 dimers bind in a sequential fashion forming a multimeric L10(L12)X complex.

Functionally, forms part of the ribosomal stalk, playing a central role in the interaction of the ribosome with GTP-bound translation factors. In Beutenbergia cavernae (strain ATCC BAA-8 / DSM 12333 / CCUG 43141 / JCM 11478 / NBRC 16432 / NCIMB 13614 / HKI 0122), this protein is Large ribosomal subunit protein uL10.